A 704-amino-acid chain; its full sequence is CAP-Gly domain-containing linker protein 4 (704 aa).

ANK repeat units lie at residues 65–101, 149–180, and 186–215; these read TSVSELFAILRQWVPQVQQNIDIIGNEILKRGCNVND, TNMNALHYASYFDVPELIRVILKTSKPKDVDA, and NFGTALHIAAHNLCAGAVKTLLELGANPAF. The CAP-Gly 1 domain maps to 303–345; it reads GTTEFASGQWAGIELDEPEGKNNGSVGRVQYFKCAPKYGIFAP. Positions 353–479 are disordered; sequence KDGRKTTTHT…SATSAANNSH (127 aa). 3 stretches are compositionally biased toward low complexity: residues 360 to 371, 423 to 432, and 440 to 461; these read THTPSTRATPHA, SMSSSSSSSS, and PKKLTTSSGGKKTLSKSPSLPS. Residues 504-546 enclose the CAP-Gly 2 domain; it reads GTTNFAPGYWYGIELEKPHGKNDGSVGGVQYFSCSPRYGIFAP. S556 and S608 each carry phosphoserine. One can recognise a CAP-Gly 3 domain in the interval 643 to 685; sequence GPTDFASGIWLGLELRSAKGKNDGAVGDKRYFTCKPNYGVLVR.

This Mus musculus (Mouse) protein is CAP-Gly domain-containing linker protein 4 (Clip4).